Reading from the N-terminus, the 1238-residue chain is Erythroid differentiation-related factor 1 (1238 aa).

Disordered regions lie at residues 1-38 (MGDA…AQGS), 220-268 (QPVS…GSEP), 517-561 (PKKE…SDDS), and 620-647 (KKES…RGGP). Composition is skewed to low complexity over residues 9-38 (AEGP…AQGS), 223-241 (SSTA…NDSE), and 253-263 (SSVSEDPSASS). Positions 530 to 547 (NSDESYSEEEEEMPDSDE) are enriched in acidic residues. 2 TPR repeats span residues 693–726 (SKAY…HDTY) and 914–953 (AQAH…LGTR).

It localises to the nucleus. Transcription factor involved in erythroid differentiation. Involved in transcriptional activation of the globin gene. The chain is Erythroid differentiation-related factor 1 (EDRF1) from Homo sapiens (Human).